We begin with the raw amino-acid sequence, 334 residues long: Protein-methionine-sulfoxide reductase catalytic subunit MsrP (334 aa).

Residues 1-44 (MKKNQFLKESDVTAESVFFMKRRQVLKALGISAAALSLPHAAHA) constitute a signal peptide (tat-type signal). Mo-molybdopterin is bound by residues asparagine 88, 91 to 92 (YE), cysteine 146, threonine 181, asparagine 233, arginine 238, and 249 to 251 (GIK).

The protein belongs to the MsrP family. As to quaternary structure, heterodimer of a catalytic subunit (MsrP) and a heme-binding subunit (MsrQ). It depends on Mo-molybdopterin as a cofactor. Predicted to be exported by the Tat system. The position of the signal peptide cleavage has not been experimentally proven.

Its subcellular location is the periplasm. It catalyses the reaction L-methionyl-[protein] + a quinone + H2O = L-methionyl-(S)-S-oxide-[protein] + a quinol. The enzyme catalyses L-methionyl-[protein] + a quinone + H2O = L-methionyl-(R)-S-oxide-[protein] + a quinol. In terms of biological role, part of the MsrPQ system that repairs oxidized periplasmic proteins containing methionine sulfoxide residues (Met-O), using respiratory chain electrons. Thus protects these proteins from oxidative-stress damage caused by reactive species of oxygen and chlorine generated by the host defense mechanisms. MsrPQ is essential for the maintenance of envelope integrity under bleach stress, rescuing a wide series of structurally unrelated periplasmic proteins from methionine oxidation, including the primary periplasmic chaperone SurA and the lipoprotein Pal. The catalytic subunit MsrP is non-stereospecific, being able to reduce both (R-) and (S-) diastereoisomers of methionine sulfoxide. This Shigella sonnei (strain Ss046) protein is Protein-methionine-sulfoxide reductase catalytic subunit MsrP.